The chain runs to 497 residues: Bifunctional protein GlmU (497 aa).

Positions methionine 1–arginine 243 are pyrophosphorylase. UDP-N-acetyl-alpha-D-glucosamine is bound by residues leucine 16–glycine 19, lysine 30, glutamine 87, and glycine 92–threonine 93. Aspartate 118 is a Mg(2+) binding site. Residues glycine 153, glutamate 168, asparagine 183, and asparagine 241 each coordinate UDP-N-acetyl-alpha-D-glucosamine. Residue asparagine 241 coordinates Mg(2+). The segment at valine 244–alanine 264 is linker. The interval glycine 265–serine 497 is N-acetyltransferase. 2 residues coordinate UDP-N-acetyl-alpha-D-glucosamine: arginine 346 and lysine 364. The Proton acceptor role is filled by histidine 376. The UDP-N-acetyl-alpha-D-glucosamine site is built by tyrosine 379 and asparagine 390. Acetyl-CoA is bound by residues alanine 393, asparagine 399–tyrosine 400, serine 418, and alanine 436. Residues alanine 473–serine 497 are disordered. Basic and acidic residues predominate over residues leucine 488–serine 497.

This sequence in the N-terminal section; belongs to the N-acetylglucosamine-1-phosphate uridyltransferase family. The protein in the C-terminal section; belongs to the transferase hexapeptide repeat family. As to quaternary structure, homotrimer. It depends on Mg(2+) as a cofactor.

Its subcellular location is the cytoplasm. It carries out the reaction alpha-D-glucosamine 1-phosphate + acetyl-CoA = N-acetyl-alpha-D-glucosamine 1-phosphate + CoA + H(+). The catalysed reaction is N-acetyl-alpha-D-glucosamine 1-phosphate + UTP + H(+) = UDP-N-acetyl-alpha-D-glucosamine + diphosphate. Its pathway is nucleotide-sugar biosynthesis; UDP-N-acetyl-alpha-D-glucosamine biosynthesis; N-acetyl-alpha-D-glucosamine 1-phosphate from alpha-D-glucosamine 6-phosphate (route II): step 2/2. It functions in the pathway nucleotide-sugar biosynthesis; UDP-N-acetyl-alpha-D-glucosamine biosynthesis; UDP-N-acetyl-alpha-D-glucosamine from N-acetyl-alpha-D-glucosamine 1-phosphate: step 1/1. The protein operates within bacterial outer membrane biogenesis; LPS lipid A biosynthesis. Its function is as follows. Catalyzes the last two sequential reactions in the de novo biosynthetic pathway for UDP-N-acetylglucosamine (UDP-GlcNAc). The C-terminal domain catalyzes the transfer of acetyl group from acetyl coenzyme A to glucosamine-1-phosphate (GlcN-1-P) to produce N-acetylglucosamine-1-phosphate (GlcNAc-1-P), which is converted into UDP-GlcNAc by the transfer of uridine 5-monophosphate (from uridine 5-triphosphate), a reaction catalyzed by the N-terminal domain. The polypeptide is Bifunctional protein GlmU (Mycobacterium sp. (strain JLS)).